Here is a 295-residue protein sequence, read N- to C-terminus: Indole-3-glycerol phosphate synthase (295 aa).

This sequence belongs to the TrpC family.

The catalysed reaction is 1-(2-carboxyphenylamino)-1-deoxy-D-ribulose 5-phosphate + H(+) = (1S,2R)-1-C-(indol-3-yl)glycerol 3-phosphate + CO2 + H2O. The protein operates within amino-acid biosynthesis; L-tryptophan biosynthesis; L-tryptophan from chorismate: step 4/5. The chain is Indole-3-glycerol phosphate synthase from Prochlorococcus marinus subsp. pastoris (strain CCMP1986 / NIES-2087 / MED4).